Here is a 468-residue protein sequence, read N- to C-terminus: ATP synthase subunit beta (468 aa).

155 to 162 lines the ATP pocket; that stretch reads GGAGVGKT.

Belongs to the ATPase alpha/beta chains family. In terms of assembly, F-type ATPases have 2 components, CF(1) - the catalytic core - and CF(0) - the membrane proton channel. CF(1) has five subunits: alpha(3), beta(3), gamma(1), delta(1), epsilon(1). CF(0) has three main subunits: a(1), b(2) and c(9-12). The alpha and beta chains form an alternating ring which encloses part of the gamma chain. CF(1) is attached to CF(0) by a central stalk formed by the gamma and epsilon chains, while a peripheral stalk is formed by the delta and b chains.

The protein localises to the cell membrane. The enzyme catalyses ATP + H2O + 4 H(+)(in) = ADP + phosphate + 5 H(+)(out). Functionally, produces ATP from ADP in the presence of a proton gradient across the membrane. The catalytic sites are hosted primarily by the beta subunits. This chain is ATP synthase subunit beta, found in Streptococcus suis (strain 98HAH33).